The chain runs to 363 residues: tRNA N6-adenosine threonylcarbamoyltransferase (363 aa).

H121 and H125 together coordinate Fe cation. Substrate is bound by residues 143-147, D176, G189, and N287; that span reads LASGG. Residue D315 coordinates Fe cation.

Belongs to the KAE1 / TsaD family. Fe(2+) serves as cofactor.

Its subcellular location is the cytoplasm. The catalysed reaction is L-threonylcarbamoyladenylate + adenosine(37) in tRNA = N(6)-L-threonylcarbamoyladenosine(37) in tRNA + AMP + H(+). Required for the formation of a threonylcarbamoyl group on adenosine at position 37 (t(6)A37) in tRNAs that read codons beginning with adenine. Is involved in the transfer of the threonylcarbamoyl moiety of threonylcarbamoyl-AMP (TC-AMP) to the N6 group of A37, together with TsaE and TsaB. TsaD likely plays a direct catalytic role in this reaction. The protein is tRNA N6-adenosine threonylcarbamoyltransferase of Rhodopseudomonas palustris (strain HaA2).